A 192-amino-acid polypeptide reads, in one-letter code: Probable GTP-binding protein EngB (192 aa).

Residues 22-192 (GRPEIVFVGR…LLERLDLFSQ (171 aa)) enclose the EngB-type G domain. GTP contacts are provided by residues 30–37 (GRSNVGKS), 57–61 (GKTRL), 75–78 (DLPG), 142–145 (TKWD), and 172–174 (YSS). 2 residues coordinate Mg(2+): serine 37 and threonine 59.

It belongs to the TRAFAC class TrmE-Era-EngA-EngB-Septin-like GTPase superfamily. EngB GTPase family. Requires Mg(2+) as cofactor.

Functionally, necessary for normal cell division and for the maintenance of normal septation. The sequence is that of Probable GTP-binding protein EngB from Chlorobaculum parvum (strain DSM 263 / NCIMB 8327) (Chlorobium vibrioforme subsp. thiosulfatophilum).